The chain runs to 642 residues: Chaperone protein DnaK (642 aa).

Thr200 bears the Phosphothreonine; by autocatalysis mark. Residues 608 to 618 (QAESQAAGEGQ) show a composition bias toward low complexity. The tract at residues 608 to 642 (QAESQAAGEGQPDAGKKDDGNVVDAEFEEVKKDKQ) is disordered.

This sequence belongs to the heat shock protein 70 family.

Its function is as follows. Acts as a chaperone. The sequence is that of Chaperone protein DnaK from Laribacter hongkongensis (strain HLHK9).